Reading from the N-terminus, the 401-residue chain is MVVSVKVFKKATPNGKVTFYLGRRDFIDHLDYCDPVDGVIVVEPEYLKNRKVFGQLATTYRYGREEDEVMGVKFSKELILSRDEIVPMTNPNMEMTPMQEKLVRKLGSNAHPFTFHFPPNSPSSVTLQQEGDDNGKPLGVEYTIRAFVGDSEDDRQHKRSMVSLVIKKLQYAPLNRGQRLPSSLVSKGFTFSNGKISLEVTLDREIYYHGEKTAATVQVSNNSKKSVKSIKCFIVQHTEITMVNAQFSKHVAQLETKEGCPITPGANLTKTFYLIPLAANNKDRHGIALDGHLKDEDVNLASSTMVQEGKNTGDACGIVISYSVRIKLNCGTLGGEMQTDVPFKLLQPAPGTIEKKRSNAMKKMKSIEQHRNVKGYYQDDDDNIVFEDFAKMRMNNVNMAD.

Belongs to the arrestin family. In terms of tissue distribution, inner and outer segments, and the inner plexiform regions of the retina.

Functionally, undergoes light-induced phosphorylation, probably plays an important role in the photoreceptor transduction. The sequence is that of Phosrestin-1 (Arr2) from Drosophila miranda (Fruit fly).